We begin with the raw amino-acid sequence, 156 residues long: Transcription elongation factor GreA (156 aa).

Residues methionine 7–arginine 27 adopt a coiled-coil conformation.

This sequence belongs to the GreA/GreB family.

Functionally, necessary for efficient RNA polymerase transcription elongation past template-encoded arresting sites. The arresting sites in DNA have the property of trapping a certain fraction of elongating RNA polymerases that pass through, resulting in locked ternary complexes. Cleavage of the nascent transcript by cleavage factors such as GreA or GreB allows the resumption of elongation from the new 3'terminus. GreA releases sequences of 2 to 3 nucleotides. This is Transcription elongation factor GreA from Lactococcus lactis subsp. lactis (strain IL1403) (Streptococcus lactis).